The following is a 346-amino-acid chain: Aspartate-semialdehyde dehydrogenase (346 aa).

NADP(+) contacts are provided by residues 12–15 (SGAV) and 40–41 (RS). R101 contributes to the phosphate binding site. C131 serves as the catalytic Acyl-thioester intermediate. A substrate-binding site is contributed by Q158. Residue 161–162 (SG) participates in NADP(+) binding. Residue K225 coordinates phosphate. Position 246 (R246) interacts with substrate. Catalysis depends on H253, which acts as the Proton acceptor. Q326 is an NADP(+) binding site.

The protein belongs to the aspartate-semialdehyde dehydrogenase family. Homodimer.

It carries out the reaction L-aspartate 4-semialdehyde + phosphate + NADP(+) = 4-phospho-L-aspartate + NADPH + H(+). It functions in the pathway amino-acid biosynthesis; L-lysine biosynthesis via DAP pathway; (S)-tetrahydrodipicolinate from L-aspartate: step 2/4. It participates in amino-acid biosynthesis; L-methionine biosynthesis via de novo pathway; L-homoserine from L-aspartate: step 2/3. The protein operates within amino-acid biosynthesis; L-threonine biosynthesis; L-threonine from L-aspartate: step 2/5. In terms of biological role, catalyzes the NADPH-dependent formation of L-aspartate-semialdehyde (L-ASA) by the reductive dephosphorylation of L-aspartyl-4-phosphate. This Helicobacter pylori (strain ATCC 700392 / 26695) (Campylobacter pylori) protein is Aspartate-semialdehyde dehydrogenase.